The sequence spans 341 residues: Paired box protein Pax-9 (341 aa).

A DNA-binding region (paired) is located at residues 4-130 (AFGEVNQLGG…SSISRILRNK (127 aa)). Residues 7–63 (EVNQLGGVFVNGRPLPNAIRLRIVELAQLGIRPCDISRQLRVSHGCVSKILARYNET) are PAI subdomain. The RED subdomain stretch occupies residues 82-130 (TVVKHIRTYKQRDPGIFAWEIRDRLLADGVCDKYNVPSVSSISRILRNK). The interaction with KDM5B stretch occupies residues 168-189 (AAAAKVPTPPGVPAIPGSVAMP).

In terms of assembly, interacts with KDM5B.

It is found in the nucleus. Its function is as follows. Transcription factor required for normal development of thymus, parathyroid glands, ultimobranchial bodies, teeth, skeletal elements of skull and larynx as well as distal limbs. The sequence is that of Paired box protein Pax-9 (PAX9) from Perodicticus potto edwarsi (Potto).